A 344-amino-acid polypeptide reads, in one-letter code: Protein pelota homolog (344 aa).

The protein belongs to the eukaryotic release factor 1 family. Pelota subfamily. In terms of assembly, monomer. The cofactor is a divalent metal cation.

It localises to the cytoplasm. Its function is as follows. May function in recognizing stalled ribosomes, interact with stem-loop structures in stalled mRNA molecules, and effect endonucleolytic cleavage of the mRNA. May play a role in the release non-functional ribosomes and degradation of damaged mRNAs. Has endoribonuclease activity. This Saccharolobus islandicus (strain M.14.25 / Kamchatka #1) (Sulfolobus islandicus) protein is Protein pelota homolog.